The sequence spans 581 residues: Pyridine nucleotide-disulfide oxidoreductase domain-containing protein 2 (581 aa).

38-71 (VVIGAGHNGLVAAAYLQRLGVNTAVFERRHVIGG) contributes to the FAD binding site.

Belongs to the carotenoid/retinoid oxidoreductase family. In terms of assembly, interacts with COX5B; this interaction may contribute to localize PYROXD2 to the inner face of the inner mitochondrial membrane.

Its subcellular location is the mitochondrion matrix. Functionally, probable oxidoreductase that may play a role as regulator of mitochondrial function. The chain is Pyridine nucleotide-disulfide oxidoreductase domain-containing protein 2 from Mus musculus (Mouse).